Here is a 244-residue protein sequence, read N- to C-terminus: tRNA pseudouridine synthase A (244 aa).

D52 (nucleophile) is an active-site residue. Substrate is bound at residue Y111.

This sequence belongs to the tRNA pseudouridine synthase TruA family. Homodimer.

It catalyses the reaction uridine(38/39/40) in tRNA = pseudouridine(38/39/40) in tRNA. In terms of biological role, formation of pseudouridine at positions 38, 39 and 40 in the anticodon stem and loop of transfer RNAs. The chain is tRNA pseudouridine synthase A from Thermosipho melanesiensis (strain DSM 12029 / CIP 104789 / BI429).